The chain runs to 243 residues: Outer membrane protein A (243 aa).

Transmembrane regions (beta stranded) follow at residues Leu1 to Pro8, Leu13 to Gly21, Pro47 to Ala56, Ile61 to Gln68, and Leu87 to Arg95. Repeat copies occupy residues Ala107–Pro108, Ala109–Pro110, Ala111–Pro112, and Ala113–Pro114. The 4 X 2 AA tandem repeats of A-P stretch occupies residues Ala107–Pro114. An OmpA-like domain is found at Val116–Ile243. A disulfide bond links Cys217 and Cys229.

Belongs to the outer membrane OOP (TC 1.B.6) superfamily. OmpA family. As to quaternary structure, monomer and homodimer.

The protein resides in the cell outer membrane. In terms of biological role, with TolR probably plays a role in maintaining the position of the peptidoglycan cell wall in the periplasm. Acts as a porin with low permeability that allows slow penetration of small solutes; an internal gate slows down solute passage. The polypeptide is Outer membrane protein A (Atlantibacter hermannii (Escherichia hermannii)).